We begin with the raw amino-acid sequence, 243 residues long: Putative outer membrane protein RP075 (243 aa).

An N-terminal signal peptide occupies residues 1–23 (MLRIVKKLWVILFISNISINSFA).

It belongs to the OmpW/AlkL family.

It localises to the cell outer membrane. In Rickettsia prowazekii (strain Madrid E), this protein is Putative outer membrane protein RP075.